Consider the following 378-residue polypeptide: Succinyl-diaminopimelate desuccinylase (378 aa).

Zn(2+) is bound at residue His-66. Asp-68 is a catalytic residue. Residue Asp-100 coordinates Zn(2+). The active-site Proton acceptor is Glu-134. Positions 135, 163, and 350 each coordinate Zn(2+).

This sequence belongs to the peptidase M20A family. DapE subfamily. In terms of assembly, homodimer. Zn(2+) serves as cofactor. Co(2+) is required as a cofactor.

It carries out the reaction N-succinyl-(2S,6S)-2,6-diaminopimelate + H2O = (2S,6S)-2,6-diaminopimelate + succinate. The protein operates within amino-acid biosynthesis; L-lysine biosynthesis via DAP pathway; LL-2,6-diaminopimelate from (S)-tetrahydrodipicolinate (succinylase route): step 3/3. Catalyzes the hydrolysis of N-succinyl-L,L-diaminopimelic acid (SDAP), forming succinate and LL-2,6-diaminopimelate (DAP), an intermediate involved in the bacterial biosynthesis of lysine and meso-diaminopimelic acid, an essential component of bacterial cell walls. In Hydrogenovibrio crunogenus (strain DSM 25203 / XCL-2) (Thiomicrospira crunogena), this protein is Succinyl-diaminopimelate desuccinylase.